Here is a 209-residue protein sequence, read N- to C-terminus: Urease accessory protein UreG (209 aa).

16–23 (GPVGSGKT) serves as a coordination point for GTP.

The protein belongs to the SIMIBI class G3E GTPase family. UreG subfamily. As to quaternary structure, homodimer. UreD, UreF and UreG form a complex that acts as a GTP-hydrolysis-dependent molecular chaperone, activating the urease apoprotein by helping to assemble the nickel containing metallocenter of UreC. The UreE protein probably delivers the nickel.

It is found in the cytoplasm. Facilitates the functional incorporation of the urease nickel metallocenter. This process requires GTP hydrolysis, probably effectuated by UreG. This Blochmanniella floridana protein is Urease accessory protein UreG.